The primary structure comprises 324 residues: Acetyl-coenzyme A carboxylase carboxyl transferase subunit alpha (324 aa).

The 255-residue stretch at 37–291 (KLERRLDKLK…RDFILREWLR (255 aa)) folds into the CoA carboxyltransferase C-terminal domain.

It belongs to the AccA family. As to quaternary structure, acetyl-CoA carboxylase is a heterohexamer composed of biotin carboxyl carrier protein (AccB), biotin carboxylase (AccC) and two subunits each of ACCase subunit alpha (AccA) and ACCase subunit beta (AccD).

It localises to the cytoplasm. The enzyme catalyses N(6)-carboxybiotinyl-L-lysyl-[protein] + acetyl-CoA = N(6)-biotinyl-L-lysyl-[protein] + malonyl-CoA. Its pathway is lipid metabolism; malonyl-CoA biosynthesis; malonyl-CoA from acetyl-CoA: step 1/1. Its function is as follows. Component of the acetyl coenzyme A carboxylase (ACC) complex. First, biotin carboxylase catalyzes the carboxylation of biotin on its carrier protein (BCCP) and then the CO(2) group is transferred by the carboxyltransferase to acetyl-CoA to form malonyl-CoA. This Chlamydia abortus (strain DSM 27085 / S26/3) (Chlamydophila abortus) protein is Acetyl-coenzyme A carboxylase carboxyl transferase subunit alpha.